Consider the following 95-residue polypeptide: Large ribosomal subunit protein bL25 (95 aa).

Belongs to the bacterial ribosomal protein bL25 family. In terms of assembly, part of the 50S ribosomal subunit; part of the 5S rRNA/L5/L18/L25 subcomplex. Contacts the 5S rRNA. Binds to the 5S rRNA independently of L5 and L18.

In terms of biological role, this is one of the proteins that binds to the 5S RNA in the ribosome where it forms part of the central protuberance. The protein is Large ribosomal subunit protein bL25 of Tolumonas auensis (strain DSM 9187 / NBRC 110442 / TA 4).